The primary structure comprises 307 residues: Pantothenate kinase (307 aa).

87–94 (GSVAVGKS) provides a ligand contact to ATP.

The protein belongs to the prokaryotic pantothenate kinase family.

It is found in the cytoplasm. The enzyme catalyses (R)-pantothenate + ATP = (R)-4'-phosphopantothenate + ADP + H(+). It participates in cofactor biosynthesis; coenzyme A biosynthesis; CoA from (R)-pantothenate: step 1/5. This chain is Pantothenate kinase, found in Vibrio vulnificus (strain CMCP6).